A 371-amino-acid chain; its full sequence is uncharacterized protein (371 aa).

Residues 20 to 250 (VTIRNVTKRY…PANIFVAGFI (231 aa)) form the ABC transporter domain. 52-59 (GPSGCGKS) lines the ATP pocket.

This sequence belongs to the ABC transporter superfamily.

It localises to the cell inner membrane. Probably part of a binding-protein-dependent transport system y4oPQRS. This system probably transports a sugar-like molecule. Probably responsible for energy coupling to the transport system. This is an uncharacterized protein from Sinorhizobium fredii (strain NBRC 101917 / NGR234).